A 358-amino-acid chain; its full sequence is 3-dehydroquinate synthase (358 aa).

Residues 69-74 (DGEQYK), 103-107 (GVIGD), 127-128 (TT), Lys140, Lys149, and 167-170 (TLNT) each bind NAD(+). Residues Glu182, His245, and His262 each contribute to the Zn(2+) site.

This sequence belongs to the sugar phosphate cyclases superfamily. Dehydroquinate synthase family. Co(2+) serves as cofactor. The cofactor is Zn(2+). It depends on NAD(+) as a cofactor.

The protein localises to the cytoplasm. The enzyme catalyses 7-phospho-2-dehydro-3-deoxy-D-arabino-heptonate = 3-dehydroquinate + phosphate. It functions in the pathway metabolic intermediate biosynthesis; chorismate biosynthesis; chorismate from D-erythrose 4-phosphate and phosphoenolpyruvate: step 2/7. Its function is as follows. Catalyzes the conversion of 3-deoxy-D-arabino-heptulosonate 7-phosphate (DAHP) to dehydroquinate (DHQ). The sequence is that of 3-dehydroquinate synthase from Hydrogenovibrio crunogenus (strain DSM 25203 / XCL-2) (Thiomicrospira crunogena).